The primary structure comprises 346 residues: Methionine import ATP-binding protein MetN 1 (346 aa).

Positions 2 to 241 constitute an ABC transporter domain; the sequence is IELKNVSKVF…PQHVTTKKFV (240 aa). An ATP-binding site is contributed by 38 to 45; the sequence is GYSGAGKS.

It belongs to the ABC transporter superfamily. Methionine importer (TC 3.A.1.24) family. The complex is composed of two ATP-binding proteins (MetN), two transmembrane proteins (MetI) and a solute-binding protein (MetQ).

The protein resides in the cell membrane. The enzyme catalyses L-methionine(out) + ATP + H2O = L-methionine(in) + ADP + phosphate + H(+). It carries out the reaction D-methionine(out) + ATP + H2O = D-methionine(in) + ADP + phosphate + H(+). Functionally, part of the ABC transporter complex MetNIQ involved in methionine import. Responsible for energy coupling to the transport system. The polypeptide is Methionine import ATP-binding protein MetN 1 (Bacillus cereus (strain ZK / E33L)).